We begin with the raw amino-acid sequence, 261 residues long: MAIPTFTMRQLLEAGVHFGHHTRRWNPKMAPYLFGVRNGVHIIDLEQSVPMMYRAMQAVRDVVAGGGRVLFVGTKRAAQEKVAESAKRCGQYYVNHRWLGGMLTNWKTISQSIRRLKEMDEQLAVGEQSGRTKKELLNMTREREKLERALGGIRDMGGLPDLLFIIDTNKESLAIQEANKLGIPVVAVVDSNSDPDGVTFPVPGNDDALRAIDTYCELIAGAVLDGLQAEMSAAGIDLGAAEEAPEEVLPAEGAEQAPAQA.

This sequence belongs to the universal ribosomal protein uS2 family.

The sequence is that of Small ribosomal subunit protein uS2 from Rhodospirillum centenum (strain ATCC 51521 / SW).